The chain runs to 180 residues: Pro-glucagon (180 aa).

The first 20 residues, 1–20, serve as a signal peptide directing secretion; that stretch reads MKTIYFVAGLLIMLVQGSWQ. The interval 25–58 is disordered; sequence DTEENPRSFPASQTEAHEDPDEMNEDKRHSQGTF. A Phosphoserine modification is found at Ser54. Residues 84-89 constitute a propeptide that is removed on maturation; sequence NRNNIA. Phosphoserine is present on residues Ser105 and Ser108. Residue Arg127 is modified to Arginine amide. A propeptide spanning residues 131 to 145 is cleaved from the precursor; the sequence is DFPEEVAIAEELGRR. Phosphoserine is present on residues Ser150 and Ser152.

It belongs to the glucagon family. In terms of processing, proglucagon is post-translationally processed in a tissue-specific manner in pancreatic A cells and intestinal L cells. In pancreatic A cells, the major bioactive hormone is glucagon cleaved by PCSK2/PC2. In the intestinal L cells PCSK1/PC1 liberates GLP-1, GLP-2, glicentin and oxyntomodulin. GLP-1 is further N-terminally truncated by post-translational processing in the intestinal L cells resulting in GLP-1(7-37) GLP-1-(7-36)amide. The C-terminal amidation is neither important for the metabolism of GLP-1 nor for its effects on the endocrine pancreas. As to expression, secreted in the A cells of the islets of Langerhans. Secreted in the A cells of the islets of Langerhans. Secreted from enteroendocrine L cells throughout the gastrointestinal tract. Also secreted in selected neurons in the brain. In terms of tissue distribution, secreted from enteroendocrine cells throughout the gastrointestinal tract. Also secreted in selected neurons in the brain. As to expression, secreted from enteroendocrine cells throughout the gastrointestinal tract.

It localises to the secreted. Its function is as follows. Plays a key role in glucose metabolism and homeostasis. Regulates blood glucose by increasing gluconeogenesis and decreasing glycolysis. A counterregulatory hormone of insulin, raises plasma glucose levels in response to insulin-induced hypoglycemia. Plays an important role in initiating and maintaining hyperglycemic conditions in diabetes. In terms of biological role, potent stimulator of glucose-dependent insulin release. Also stimulates insulin release in response to IL6. Plays important roles on gastric motility and the suppression of plasma glucagon levels. May be involved in the suppression of satiety and stimulation of glucose disposal in peripheral tissues, independent of the actions of insulin. Has growth-promoting activities on intestinal epithelium. May also regulate the hypothalamic pituitary axis (HPA) via effects on LH, TSH, CRH, oxytocin, and vasopressin secretion. Increases islet mass through stimulation of islet neogenesis and pancreatic beta cell proliferation. Inhibits beta cell apoptosis. Stimulates intestinal growth and up-regulates villus height in the small intestine, concomitant with increased crypt cell proliferation and decreased enterocyte apoptosis. The gastrointestinal tract, from the stomach to the colon is the principal target for GLP-2 action. Plays a key role in nutrient homeostasis, enhancing nutrient assimilation through enhanced gastrointestinal function, as well as increasing nutrient disposal. Stimulates intestinal glucose transport and decreases mucosal permeability. Functionally, significantly reduces food intake. Inhibits gastric emptying in humans. Suppression of gastric emptying may lead to increased gastric distension, which may contribute to satiety by causing a sensation of fullness. Its function is as follows. May modulate gastric acid secretion and the gastro-pyloro-duodenal activity. May play an important role in intestinal mucosal growth in the early period of life. This Mus musculus (Mouse) protein is Pro-glucagon (Gcg).